The primary structure comprises 397 residues: MKFNKEKLVIHACVLLFIIISIGLVFHRLQTKTNSIEPIHKETKLSDNAKYLVDRNKGKGEPSKLKEVYNSKDPKYKKIDRYLQNSLFNGSVAVYENGKLKMSKGYGYQDFEKGIKNTPNTMFLIGSAQKFSTGLLLKQLEEEHKININDPVSKYIPWFKTSKPIPLKDLMLHQSGLYKYKSSKDYKNLDQAVRAIQKRGIDPKKYKKHMYNDGNYLVLAKVIEEVTGKSYAENYYTKIGDPLKLQHSAFYDEKSFRKYFAKGYSYNSTGLSFLKPNVLEQYYGAGNIYMTPTDMGKLITQIQQYKLFSPKITNPLLHEFGTKQYPDEYRYGFYVKPTLNRLNGGLFGQVFTVYYNDKYVVVLALNVKGNNEVRIKHIYNDILKQNKPYNTKGVIVQ.

An N-terminal signal peptide occupies residues 1-27; that stretch reads MKFNKEKLVIHACVLLFIIISIGLVFH.

The protein resides in the cell membrane. The enzyme catalyses [(4-D-Ala)-(2-GlcNAc)-Rib-ol-P]n-[Gro-P]m-beta-D-ManNAc-(1-&gt;4)-alpha-D-GlcNAc-P-peptidoglycan + n H2O = [(2-GlcNAc)-Rib-ol-P]n-[Gro-P]m-beta-D-ManNAc-(1-&gt;4)-alpha-D-GlcNAc-P-peptidoglycan + n D-alanine.. Its function is as follows. Catalyzes the liberation of D-alanyl moieties present on wall teichoic acid (WTA) and lipoteichoic acid (LTA). Affects the methicillin resistance level and autolysis in the presence of Triton X-100 as well as the cell wall structure. The sequence is that of Teichoic acid D-alanine hydrolase (fmtA) from Staphylococcus aureus (strain MRSA252).